Reading from the N-terminus, the 338-residue chain is S-adenosylmethionine:tRNA ribosyltransferase-isomerase (338 aa).

The protein belongs to the QueA family. In terms of assembly, monomer.

The protein resides in the cytoplasm. It carries out the reaction 7-aminomethyl-7-carbaguanosine(34) in tRNA + S-adenosyl-L-methionine = epoxyqueuosine(34) in tRNA + adenine + L-methionine + 2 H(+). Its pathway is tRNA modification; tRNA-queuosine biosynthesis. Functionally, transfers and isomerizes the ribose moiety from AdoMet to the 7-aminomethyl group of 7-deazaguanine (preQ1-tRNA) to give epoxyqueuosine (oQ-tRNA). This is S-adenosylmethionine:tRNA ribosyltransferase-isomerase from Francisella tularensis subsp. novicida (strain U112).